Consider the following 378-residue polypeptide: Alginate lyase (378 aa).

The N-terminal stretch at 1–28 (MQTPKLIRPTLLSMAIVSSMAWATGASA) is a signal peptide. Substrate-binding positions include 67–68 (SK), 140–141 (HT), and tyrosine 258.

Belongs to the polysaccharide lyase 5 family.

Its subcellular location is the periplasm. It catalyses the reaction Eliminative cleavage of alginate to give oligosaccharides with 4-deoxy-alpha-L-erythro-hex-4-enuronosyl groups at their non-reducing ends and beta-D-mannuronate at their reducing end.. Its function is as follows. Catalyzes the depolymerization of alginate by cleaving the beta-1,4 glycosidic bond between two adjacent sugar residues via a beta-elimination mechanism. May serve to degrade mislocalized alginate that is trapped in the periplasmic space. This chain is Alginate lyase, found in Pseudomonas syringae pv. tomato (strain ATCC BAA-871 / DC3000).